The chain runs to 248 residues: MIICKTPRELGIMREAGRIVALTHEELKKHIKPGISTKELDQIAERFIKKQGAIPSFKGYNGFRGSICVSVNEELVHGIPGSRVLKDGDIISIDIGAKLNGYHGDSAWTYPVGNISDDDKKLLEVTEESLYKGLQEAKPGERLSNISHAIQTYVENEQFSVVREYVGHGVGQDLHEDPQIPHYGPPNKGPRLKPGMVLAIEPMVNAGSRYVKTLADNWTVVTVDGKKCAHFEHTIAITETGFDILTRV.

Histidine 77 is a substrate binding site. A divalent metal cation contacts are provided by aspartate 94, aspartate 105, and histidine 168. Histidine 175 contacts substrate. 2 residues coordinate a divalent metal cation: glutamate 201 and glutamate 232.

As to quaternary structure, monomer. Requires Co(2+) as cofactor. Zn(2+) serves as cofactor. Mn(2+) is required as a cofactor. The cofactor is Fe(2+).

The protein localises to the cytoplasm. It catalyses the reaction Release of N-terminal amino acids, preferentially methionine, from peptides and arylamides.. Functionally, removes the N-terminal methionine from nascent proteins. The N-terminal methionine is often cleaved when the second residue in the primary sequence is small and uncharged (Met-Ala-, Cys, Gly, Pro, Ser, Thr, or Val). Requires deformylation of the N(alpha)-formylated initiator methionine before it can be hydrolyzed. This Bacillus subtilis (strain 168) protein is Methionine aminopeptidase 1.